Here is a 144-residue protein sequence, read N- to C-terminus: Small ribosomal subunit protein bS6 (144 aa).

The interval 99–144 (KASPLAPCEEKGEEGKAEDAADELTTFGMADDDDLGDDDDTVEAGI) is disordered. Residues 106–117 (CEEKGEEGKAED) are compositionally biased toward basic and acidic residues. Acidic residues predominate over residues 128–144 (ADDDDLGDDDDTVEAGI).

It belongs to the bacterial ribosomal protein bS6 family.

Binds together with bS18 to 16S ribosomal RNA. The sequence is that of Small ribosomal subunit protein bS6 from Magnetococcus marinus (strain ATCC BAA-1437 / JCM 17883 / MC-1).